A 1434-amino-acid polypeptide reads, in one-letter code: DNA-directed RNA polymerase subunit beta (1434 aa).

Belongs to the RNA polymerase beta chain family. The RNAP catalytic core consists of 2 alpha, 1 beta, 1 beta' and 1 omega subunit. When a sigma factor is associated with the core the holoenzyme is formed, which can initiate transcription.

It carries out the reaction RNA(n) + a ribonucleoside 5'-triphosphate = RNA(n+1) + diphosphate. Its function is as follows. DNA-dependent RNA polymerase catalyzes the transcription of DNA into RNA using the four ribonucleoside triphosphates as substrates. This is DNA-directed RNA polymerase subunit beta from Ureaplasma urealyticum serovar 10 (strain ATCC 33699 / Western).